A 141-amino-acid polypeptide reads, in one-letter code: Large ribosomal subunit protein uL16 (141 aa).

Basic residues predominate over residues 1-16; that stretch reads MLMPRKPPKGFRKPHH. A disordered region spans residues 1 to 27; that stretch reads MLMPRKPPKGFRKPHHPDRSGASKGGN.

It belongs to the universal ribosomal protein uL16 family. Part of the 50S ribosomal subunit.

In terms of biological role, binds 23S rRNA and is also seen to make contacts with the A and possibly P site tRNAs. The protein is Large ribosomal subunit protein uL16 of Salinispora arenicola (strain CNS-205).